A 200-amino-acid polypeptide reads, in one-letter code: LexA repressor (200 aa).

Positions 28–48 (RAEIAEILGFKSANAAEEHLK) form a DNA-binding region, H-T-H motif. Catalysis depends on for autocatalytic cleavage activity residues serine 118 and lysine 155.

Belongs to the peptidase S24 family. In terms of assembly, homodimer.

The enzyme catalyses Hydrolysis of Ala-|-Gly bond in repressor LexA.. Its function is as follows. Represses a number of genes involved in the response to DNA damage (SOS response), including recA and lexA. In the presence of single-stranded DNA, RecA interacts with LexA causing an autocatalytic cleavage which disrupts the DNA-binding part of LexA, leading to derepression of the SOS regulon and eventually DNA repair. This is LexA repressor from Teredinibacter turnerae (strain ATCC 39867 / T7901).